Reading from the N-terminus, the 362-residue chain is Phosphoserine aminotransferase (362 aa).

Residues serine 9 and arginine 42 each contribute to the L-glutamate site. Pyridoxal 5'-phosphate is bound by residues 76–77 (GR), tryptophan 102, threonine 153, aspartate 174, and glutamine 197. An N6-(pyridoxal phosphate)lysine modification is found at lysine 198. 239–240 (NT) is a pyridoxal 5'-phosphate binding site.

It belongs to the class-V pyridoxal-phosphate-dependent aminotransferase family. SerC subfamily. As to quaternary structure, homodimer. Pyridoxal 5'-phosphate serves as cofactor.

It is found in the cytoplasm. It catalyses the reaction O-phospho-L-serine + 2-oxoglutarate = 3-phosphooxypyruvate + L-glutamate. It carries out the reaction 4-(phosphooxy)-L-threonine + 2-oxoglutarate = (R)-3-hydroxy-2-oxo-4-phosphooxybutanoate + L-glutamate. The protein operates within amino-acid biosynthesis; L-serine biosynthesis; L-serine from 3-phospho-D-glycerate: step 2/3. Its pathway is cofactor biosynthesis; pyridoxine 5'-phosphate biosynthesis; pyridoxine 5'-phosphate from D-erythrose 4-phosphate: step 3/5. Functionally, catalyzes the reversible conversion of 3-phosphohydroxypyruvate to phosphoserine and of 3-hydroxy-2-oxo-4-phosphonooxybutanoate to phosphohydroxythreonine. This is Phosphoserine aminotransferase from Salmonella newport (strain SL254).